Consider the following 623-residue polypeptide: Putative chaperone protein ClpB2, chloroplastic (623 aa).

The 123-residue stretch at 1–123 folds into the Clp R domain; the sequence is MNDLKFDPNV…KSEVEKLRGE (123 aa). Repeat stretches follow at residues 6–71 and 77–123; these read FDPN…NQSL and RNLG…LRGE. The segment at 129 to 375 is i; sequence LKTYGTDLVE…HVKAQLDIQP (247 aa). Residue 172–179 coordinates ATP; sequence GEPGVGKT. A coiled-coil region spans residues 368-462; it reads KAQLDIQPEE…LQEAERQHDV (95 aa). 571-578 is a binding site for ATP; that stretch reads GPTGVGKT.

Belongs to the ClpA/ClpB family.

This is Putative chaperone protein ClpB2, chloroplastic (CLPB2) from Arabidopsis thaliana (Mouse-ear cress).